The following is a 371-amino-acid chain: 4-hydroxyphenylpyruvate dioxygenase-like protein (371 aa).

2 VOC domains span residues 7 to 135 (RLCH…LLQR) and 160 to 328 (HVDH…VFTK). 3 residues coordinate Fe cation: H163, H258, and E339.

This sequence belongs to the 4HPPD family. Requires Fe cation as cofactor.

Its subcellular location is the mitochondrion. It carries out the reaction 3-(4-hydroxyphenyl)pyruvate + O2 = (S)-4-hydroxymandelate + CO2. Functionally, iron-dependent dioxygenase that catalyzes the conversion of 4-hydroxyphenylpyruvate (4-HPPA) to 4-hydroxymandelate (4-HMA) in the mitochondria, one of the steps in the biosynthesis of coenzyme Q10 from tyrosine. The sequence is that of 4-hydroxyphenylpyruvate dioxygenase-like protein from Mus musculus (Mouse).